Here is a 249-residue protein sequence, read N- to C-terminus: DnaJ homolog subfamily C member 5 homolog (249 aa).

The residue at position 12 (Ser12) is a Phosphoserine. Thr13 carries the post-translational modification Phosphothreonine. Ser14 and Ser17 each carry phosphoserine. Residues 15–84 (GDSLYEILGL…RNIYDNYGSL (70 aa)) form the J domain. Tyr19 is subject to Phosphotyrosine. Residues 146 to 162 (HDQYSHLNRPDGNREGN) show a composition bias toward basic and acidic residues. Disordered regions lie at residues 146-177 (HDQY…LEDV) and 218-249 (PFTG…NQKY). The span at 227-241 (NENTSLNTTEQTTYT) shows a compositional bias: polar residues.

In terms of processing, fatty acylated. Heavily palmitoylated in the cysteine string motif. Expressed in wide range of synaptic terminals: embryonic nervous system, larval neuromuscular junctions, adult visual system (neuropil of optic ganglia and terminal of R1-8 photoreceptors) and thoracic neuromuscular junctions. Also expressed in non-neuronal cells: follicle cells, spermatheca, testis and ejaculatory bulb. Low level of expression is found in many neuronal and non-neuronal tissues.

The protein resides in the membrane. May have an important role in presynaptic function. This is DnaJ homolog subfamily C member 5 homolog from Drosophila melanogaster (Fruit fly).